Reading from the N-terminus, the 335-residue chain is Glyceraldehyde-3-phosphate dehydrogenase 1 (335 aa).

Residues 12 to 13 (RI), D34, R78, and S120 contribute to the NAD(+) site. Residues 151 to 153 (SCT) and T182 contribute to the D-glyceraldehyde 3-phosphate site. The active-site Nucleophile is C152. N183 is a binding site for NAD(+). D-glyceraldehyde 3-phosphate is bound by residues R197, 210–211 (TG), and R233. Residue N315 participates in NAD(+) binding.

This sequence belongs to the glyceraldehyde-3-phosphate dehydrogenase family. Homotetramer. Interacts with BrxC. Post-translationally, in response to oxidative stress, the active site Cys likely reacts with bacillithiol (BSH) to form mixed disulfides to protect the Cys residue against overoxidation. S-bacillithiolation presumably leads to loss of catalytic activity. Debacillithiolation by monothiol bacilliredoxin BrxC restores the activity.

The protein resides in the cytoplasm. It carries out the reaction D-glyceraldehyde 3-phosphate + phosphate + NAD(+) = (2R)-3-phospho-glyceroyl phosphate + NADH + H(+). The protein operates within carbohydrate degradation; glycolysis; pyruvate from D-glyceraldehyde 3-phosphate: step 1/5. Its function is as follows. Involved in the glycolysis. Catalyzes the oxidative phosphorylation of glyceraldehyde 3-phosphate (G3P) to 1,3-bisphosphoglycerate (BPG) using the cofactor NAD. The first reaction step involves the formation of a hemiacetal intermediate between G3P and a cysteine residue, and this hemiacetal intermediate is then oxidized to a thioester, with concomitant reduction of NAD to NADH. The reduced NADH is then exchanged with the second NAD, and the thioester is attacked by a nucleophilic inorganic phosphate to produce BPG. The sequence is that of Glyceraldehyde-3-phosphate dehydrogenase 1 from Bacillus subtilis (strain 168).